Here is a 154-residue protein sequence, read N- to C-terminus: Endoribonuclease YbeY (154 aa).

Residues H113, H117, and H123 each coordinate Zn(2+).

The protein belongs to the endoribonuclease YbeY family. The cofactor is Zn(2+).

The protein resides in the cytoplasm. Its function is as follows. Single strand-specific metallo-endoribonuclease involved in late-stage 70S ribosome quality control and in maturation of the 3' terminus of the 16S rRNA. This is Endoribonuclease YbeY from Aeromonas hydrophila subsp. hydrophila (strain ATCC 7966 / DSM 30187 / BCRC 13018 / CCUG 14551 / JCM 1027 / KCTC 2358 / NCIMB 9240 / NCTC 8049).